The chain runs to 479 residues: ATP-dependent protease ATPase subunit HslU (479 aa).

ATP is bound by residues isoleucine 32, 74–79 (GVGKTE), aspartate 290, glutamate 355, and arginine 427.

It belongs to the ClpX chaperone family. HslU subfamily. As to quaternary structure, a double ring-shaped homohexamer of HslV is capped on each side by a ring-shaped HslU homohexamer. The assembly of the HslU/HslV complex is dependent on binding of ATP.

It localises to the cytoplasm. Functionally, ATPase subunit of a proteasome-like degradation complex; this subunit has chaperone activity. The binding of ATP and its subsequent hydrolysis by HslU are essential for unfolding of protein substrates subsequently hydrolyzed by HslV. HslU recognizes the N-terminal part of its protein substrates and unfolds these before they are guided to HslV for hydrolysis. This Leptospira interrogans serogroup Icterohaemorrhagiae serovar copenhageni (strain Fiocruz L1-130) protein is ATP-dependent protease ATPase subunit HslU.